Consider the following 488-residue polypeptide: Mannosylglycerate hydrolase MGH1 (488 aa).

Substrate is bound by residues Tyr-94, 98–101 (WNWD), Tyr-146, Gln-167, and Gly-227. Asp-229 functions as the Proton donor in the catalytic mechanism. Residues Arg-262 and 415–416 (YW) contribute to the substrate site. Catalysis depends on Glu-459, which acts as the Proton acceptor.

The protein belongs to the glycosyl hydrolase 63 family.

The catalysed reaction is (2R)-2-O-(alpha-D-mannosyl)-glycerate + H2O = D-mannose + (R)-glycerate. It catalyses the reaction (2R)-2-O-(alpha-D-glucopyranosyl)-glycerate + H2O = (R)-glycerate + D-glucose. With respect to regulation, activity is not dependent on divalent cations, but it is enhanced by Mn(2+). In terms of biological role, catalyzes the hydrolysis of alpha-D-mannosyl-glycerate (MG) to D-glycerate and D-mannose. Can also hydrolyze alpha-D-glucopyranosyl-glycerate (GG)with lower efficiency. The sequence is that of Mannosylglycerate hydrolase MGH1 from Selaginella moellendorffii (Spikemoss).